A 343-amino-acid polypeptide reads, in one-letter code: Cytoplasmic tRNA 2-thiolation protein 1 (343 aa).

Belongs to the TtcA family. CTU1/NCS6/ATPBD3 subfamily.

The protein resides in the cytoplasm. The protein operates within tRNA modification; 5-methoxycarbonylmethyl-2-thiouridine-tRNA biosynthesis. Functionally, plays a central role in 2-thiolation of mcm(5)S(2)U at tRNA wobble positions of tRNA(Lys), tRNA(Glu) and tRNA(Gln). Directly binds tRNAs and probably acts by catalyzing adenylation of tRNAs, an intermediate required for 2-thiolation. It is unclear whether it acts as a sulfurtransferase that transfers sulfur from thiocarboxylated URM1 onto the uridine of tRNAs at wobble position. This Drosophila willistoni (Fruit fly) protein is Cytoplasmic tRNA 2-thiolation protein 1.